The primary structure comprises 341 residues: S-adenosylmethionine:tRNA ribosyltransferase-isomerase (341 aa).

The protein belongs to the QueA family. In terms of assembly, monomer.

The protein resides in the cytoplasm. It carries out the reaction 7-aminomethyl-7-carbaguanosine(34) in tRNA + S-adenosyl-L-methionine = epoxyqueuosine(34) in tRNA + adenine + L-methionine + 2 H(+). Its pathway is tRNA modification; tRNA-queuosine biosynthesis. In terms of biological role, transfers and isomerizes the ribose moiety from AdoMet to the 7-aminomethyl group of 7-deazaguanine (preQ1-tRNA) to give epoxyqueuosine (oQ-tRNA). The sequence is that of S-adenosylmethionine:tRNA ribosyltransferase-isomerase from Clostridium botulinum (strain Kyoto / Type A2).